Here is a 306-residue protein sequence, read N- to C-terminus: Phosphoribosylaminoimidazole-succinocarboxamide synthase (306 aa).

At serine 2 the chain carries N-acetylserine.

It belongs to the SAICAR synthetase family. As to quaternary structure, monomer.

It carries out the reaction 5-amino-1-(5-phospho-D-ribosyl)imidazole-4-carboxylate + L-aspartate + ATP = (2S)-2-[5-amino-1-(5-phospho-beta-D-ribosyl)imidazole-4-carboxamido]succinate + ADP + phosphate + 2 H(+). It functions in the pathway purine metabolism; IMP biosynthesis via de novo pathway; 5-amino-1-(5-phospho-D-ribosyl)imidazole-4-carboxamide from 5-amino-1-(5-phospho-D-ribosyl)imidazole-4-carboxylate: step 1/2. Functionally, catalyzes the reaction of 4-carboxy-5-aminoimidazole ribotide (CAIR) and aspartic acid with the formation of N-succinyl-5-amino-imidazole-4-carboxamide ribotide (SAICAR) in the purine biosynthesis pathway. The polypeptide is Phosphoribosylaminoimidazole-succinocarboxamide synthase (ADE1) (Saccharomyces cerevisiae (strain ATCC 204508 / S288c) (Baker's yeast)).